We begin with the raw amino-acid sequence, 1037 residues long: Probable aminoglycoside efflux pump (1037 aa).

At 1–9 (MANFFIDRP) the chain is on the cytoplasmic side. A helical transmembrane segment spans residues 10–28 (IFAWVLAILLCLTGTLAIF). The Periplasmic segment spans residues 29-339 (SLPVEQYPDL…TSFVKASIED (311 aa)). A helical membrane pass occupies residues 340 to 359 (VVKTLLEAIALVFLVMYLFL). Residues 360 to 365 (QNFRAT) lie on the Cytoplasmic side of the membrane. A helical transmembrane segment spans residues 366–385 (LIPTIAVPVVLMGTFSVLYA). Over 386-391 (FGYSVN) the chain is Periplasmic. The chain crosses the membrane as a helical span at residues 392–413 (TLTMFAMVLAIGLLVDDAIVVV). Residues 414–441 (ENVERIMSEEGLTPREATRKSMGQIQGA) lie on the Cytoplasmic side of the membrane. A helical transmembrane segment spans residues 442–460 (LVGIAMVLSAVFVPMAFFG). Topologically, residues 461–473 (GTTGAIYRQFSIT) are periplasmic. The chain crosses the membrane as a helical span at residues 474–496 (IVAAMVLSVLVAMILTPALCATL). Residues 497 to 537 (LKPLKKGEHHGQKGFFAWFNQMFNRNAERYEKGVAKILHRS) are Cytoplasmic-facing. Residues 538 to 556 (LRWIVIYVLLLGGMVFLFL) form a helical membrane-spanning segment. Over 557 to 870 (RLPTSFLPLE…SYQERLSGAQ (314 aa)) the chain is Periplasmic. A helical transmembrane segment spans residues 871-890 (APALYAISLLVVFLCLAALY). Topologically, residues 891-896 (ESWSVP) are cytoplasmic. The helical transmembrane segment at 897–916 (FSVMLVVPLGVIGALLATWM) threads the bilayer. The Periplasmic portion of the chain corresponds to 917-922 (RGLEND). Residues 923–944 (VYFQVGLLTVIGLSAKNAILIV) form a helical membrane-spanning segment. Topologically, residues 945–971 (EFANEMNQKGHDLFEATLHACRQRLRP) are cytoplasmic. A helical transmembrane segment spans residues 972-990 (ILMTSLAFIFGVLPMATST). The Periplasmic segment spans residues 991-1003 (GAGSGGQHAVGTG). Residues 1004 to 1026 (VMGGMISATILAIYFVPLFFVLV) form a helical membrane-spanning segment. Topologically, residues 1027 to 1037 (RRRFPLKPRPE) are cytoplasmic.

It belongs to the resistance-nodulation-cell division (RND) (TC 2.A.6) family.

Its subcellular location is the cell inner membrane. Functionally, participates in the efflux of aminoglycosides. Confers resistance to a variety of these substances. The protein is Probable aminoglycoside efflux pump (acrD) of Escherichia coli (strain K12).